The sequence spans 301 residues: WD repeat-containing protein SL1-17 (301 aa).

7 WD repeats span residues 11-54, 59-98, 101-140, 143-182, 184-223, 227-266, and 269-300; these read AHKE…LKCL, GHRL…LTKT, GDPA…KEGS, LEGK…VQFL, GHAT…LVIP, GHKG…EKHC, and THED…IYQC.

The protein is WD repeat-containing protein SL1-17 of Schistosoma mansoni (Blood fluke).